Here is a 222-residue protein sequence, read N- to C-terminus: 2-amino-5-formylamino-6-ribosylaminopyrimidin-4(3H)-one 5'-monophosphate deformylase (222 aa).

Fe cation contacts are provided by glutamate 29, histidine 31, aspartate 40, and histidine 108.

It belongs to the creatininase superfamily. FAPy deformylase family. As to quaternary structure, homodimer. The cofactor is Fe(2+). Zn(2+) serves as cofactor.

It carries out the reaction 2-amino-5-formylamino-6-(5-phospho-D-ribosylamino)pyrimidin-4(3H)-one + H2O = 2,5-diamino-6-(1-D-ribosylamino)pyrimidin-4(3H)-one 5'-phosphate + formate + H(+). It functions in the pathway cofactor biosynthesis; coenzyme F420 biosynthesis. It participates in cofactor biosynthesis; riboflavin biosynthesis. Functionally, catalyzes the hydrolysis of the formamide of 2-amino-5-formylamino-6-ribosylamino-4(3H)-pyrimidinone 5'-monophosphate (FAPy) to form 2,5-diamino-6-ribosylamino-4(3H)-pyrimidinone 5'-phosphate (APy). The sequence is that of 2-amino-5-formylamino-6-ribosylaminopyrimidin-4(3H)-one 5'-monophosphate deformylase from Methanocaldococcus infernus (strain DSM 11812 / JCM 15783 / ME).